Reading from the N-terminus, the 305-residue chain is Plant-type L-asparaginase (305 aa).

The active-site Nucleophile is T175. Substrate-binding positions include R202–D205 and T224–G227.

This sequence belongs to the Ntn-hydrolase family. As to quaternary structure, heterotetramer of two alpha and two beta chains arranged as a dimer of alpha/beta heterodimers. The uncleaved protein forms homodimers. In terms of processing, autocleaved. Generates the alpha and beta subunits. The N-terminal residue of the beta subunit is thought to be responsible for the nucleophile hydrolase activity.

The catalysed reaction is L-asparagine + H2O = L-aspartate + NH4(+). Catalyzes the hydrolysis of L-asparagine into L-aspartate and ammonia. Does not exhibit glutaminase activity. The polypeptide is Plant-type L-asparaginase (Pyrococcus abyssi (strain GE5 / Orsay)).